Consider the following 374-residue polypeptide: DNA replication and repair protein RecF (374 aa).

30–37 (GHNAQGKT) is a binding site for ATP.

The protein belongs to the RecF family.

It localises to the cytoplasm. Functionally, the RecF protein is involved in DNA metabolism; it is required for DNA replication and normal SOS inducibility. RecF binds preferentially to single-stranded, linear DNA. It also seems to bind ATP. This chain is DNA replication and repair protein RecF, found in Limosilactobacillus reuteri (strain DSM 20016) (Lactobacillus reuteri).